We begin with the raw amino-acid sequence, 770 residues long: Proprotein convertase subtilisin/kexin type 7 (770 aa).

Residues 1–36 (MPKGRQKVPHLDAHLGLPICLWLELAIFFLVPQVMG) form the signal peptide. Residues 37 to 140 (LSEAGGLDIL…EQTLLKRAKR (104 aa)) constitute a propeptide that is removed on maturation. Over 141–666 (SIHFNDPKYP…YTITPNTLKT (526 aa)) the chain is Extracellular. Residues 152-472 (QWHLNNRRSP…FGLLNAWRLV (321 aa)) form the Peptidase S8 domain. 2 N-linked (GlcNAc...) asparagine glycosylation sites follow: N166 and N174. D186 acts as the Charge relay system in catalysis. A disordered region spans residues 195–228 (DIAPNYSPEGSYDLNSNDPDPMPHPDEENGNHHG). Residues 215 to 225 (PMPHPDEENGN) show a composition bias toward basic and acidic residues. The Charge relay system role is filled by H227. N240 is a glycosylation site (N-linked (GlcNAc...) asparagine). S405 acts as the Charge relay system in catalysis. A P/Homo B domain is found at 480-617 (SVPYLASYVS…QLTLYGSMWS (138 aa)). The N-linked (GlcNAc...) asparagine glycan is linked to N510. Residues 667-687 (LVLVGCFSVFWTIYYMLEVCL) form a helical membrane-spanning segment. Topologically, residues 688–770 (SQRNKASTHG…LLQGKSGQIC (83 aa)) are cytoplasmic.

Belongs to the peptidase S8 family. Requires Ca(2+) as cofactor. Widely expressed. Expressed in brain, lung, muscle, heart, liver, kidney, spleen and thymus.

It is found in the golgi apparatus. The protein localises to the trans-Golgi network membrane. Inhibited by zinc and copper. Its function is as follows. Serine endoprotease that processes various proproteins by cleavage at paired basic amino acids, recognizing the RXXX[KR]R consensus motif. Likely functions in the constitutive secretory pathway. The protein is Proprotein convertase subtilisin/kexin type 7 (Pcsk7) of Mus musculus (Mouse).